The chain runs to 138 residues: ATP synthase epsilon chain (138 aa).

The protein belongs to the ATPase epsilon chain family. As to quaternary structure, F-type ATPases have 2 components, CF(1) - the catalytic core - and CF(0) - the membrane proton channel. CF(1) has five subunits: alpha(3), beta(3), gamma(1), delta(1), epsilon(1). CF(0) has three main subunits: a, b and c.

The protein resides in the cell inner membrane. Functionally, produces ATP from ADP in the presence of a proton gradient across the membrane. This chain is ATP synthase epsilon chain, found in Acidovorax ebreus (strain TPSY) (Diaphorobacter sp. (strain TPSY)).